Consider the following 77-residue polypeptide: U11-lycotoxin-Ls1d (77 aa).

The signal sequence occupies residues 1-20 (MKLIIFTGLVLFAIVSLIEA). Positions 21-26 (EEESGR) are excised as a propeptide.

It belongs to the neurotoxin 19 (CSTX) family. 10 (U11-Lctx) subfamily. Post-translationally, contains 4 disulfide bonds. In terms of tissue distribution, expressed by the venom gland.

It localises to the secreted. In Lycosa singoriensis (Wolf spider), this protein is U11-lycotoxin-Ls1d.